We begin with the raw amino-acid sequence, 70 residues long: Small ribosomal subunit protein bS21 (70 aa).

A disordered region spans residues 40–70; the sequence is KPTAERKRKHAAAVKRHYKRIRSQQLPPRLY. Over residues 45–61 the composition is skewed to basic residues; it reads RKRKHAAAVKRHYKRIR.

Belongs to the bacterial ribosomal protein bS21 family.

The polypeptide is Small ribosomal subunit protein bS21 (Bordetella parapertussis (strain 12822 / ATCC BAA-587 / NCTC 13253)).